A 173-amino-acid chain; its full sequence is Large ribosomal subunit protein uL29c (173 aa).

A chloroplast-targeting transit peptide spans 1–60 (MLSLSIATPGTAAIFRRGTASATSTSSSFHGVRIQHQVSARVPAAATISSSSPKPSVVMM). Positions 143 to 173 (KKSIVPRPPPSLKKLQEEEAAEEAAEAAKSA) are disordered. Serine 172 carries the post-translational modification Phosphoserine.

It belongs to the universal ribosomal protein uL29 family. Part of the 50S ribosomal subunit.

It is found in the plastid. It localises to the chloroplast. The sequence is that of Large ribosomal subunit protein uL29c (RPL29) from Arabidopsis thaliana (Mouse-ear cress).